The chain runs to 301 residues: Cytidine deaminase 1 (301 aa).

CMP/dCMP-type deaminase domains lie at 23–156 and 188–301; these read SVIQ…FGPD and DSSA…CYEA. 64–66 serves as a coordination point for substrate; that stretch reads NVE. His-77 is a Zn(2+) binding site. The active-site Proton donor is Glu-79. Zn(2+)-binding residues include Cys-104 and Cys-107.

This sequence belongs to the cytidine and deoxycytidylate deaminase family. As to quaternary structure, homodimer. Zn(2+) is required as a cofactor. As to expression, expressed in roots, rosette leaves, stems and flowers.

The catalysed reaction is cytidine + H2O + H(+) = uridine + NH4(+). The enzyme catalyses 2'-deoxycytidine + H2O + H(+) = 2'-deoxyuridine + NH4(+). With respect to regulation, inhibited by uridine, CMP and dCMP. In terms of biological role, this enzyme scavenges exogenous and endogenous cytidine and 2'-deoxycytidine for UMP synthesis. Functions as a conventional cytidine deaminase. Has no affinity for RNA and is not involved in RNA-editing by C-to-U deamination. This chain is Cytidine deaminase 1 (CDA1), found in Arabidopsis thaliana (Mouse-ear cress).